The following is a 97-amino-acid chain: Co-chaperonin GroES (97 aa).

This sequence belongs to the GroES chaperonin family. Heptamer of 7 subunits arranged in a ring. Interacts with the chaperonin GroEL.

The protein localises to the cytoplasm. Its function is as follows. Together with the chaperonin GroEL, plays an essential role in assisting protein folding. The GroEL-GroES system forms a nano-cage that allows encapsulation of the non-native substrate proteins and provides a physical environment optimized to promote and accelerate protein folding. GroES binds to the apical surface of the GroEL ring, thereby capping the opening of the GroEL channel. The protein is Co-chaperonin GroES of Yersinia pseudotuberculosis serotype O:1b (strain IP 31758).